Consider the following 335-residue polypeptide: Ferrochelatase (335 aa).

Residues histidine 192 and glutamate 291 each contribute to the Fe cation site.

It belongs to the ferrochelatase family.

The protein resides in the cytoplasm. It carries out the reaction heme b + 2 H(+) = protoporphyrin IX + Fe(2+). It functions in the pathway porphyrin-containing compound metabolism; protoheme biosynthesis; protoheme from protoporphyrin-IX: step 1/1. Functionally, catalyzes the ferrous insertion into protoporphyrin IX. The chain is Ferrochelatase from Bdellovibrio bacteriovorus (strain ATCC 15356 / DSM 50701 / NCIMB 9529 / HD100).